The primary structure comprises 251 residues: Zinc import ATP-binding protein ZnuC (251 aa).

The ABC transporter domain maps to 5–220 (VSLENVSVSF…PEFISMFGPR (216 aa)). Position 37–44 (37–44 (GPNGAGKS)) interacts with ATP.

Belongs to the ABC transporter superfamily. Zinc importer (TC 3.A.1.15.5) family. As to quaternary structure, the complex is composed of two ATP-binding proteins (ZnuC), two transmembrane proteins (ZnuB) and a solute-binding protein (ZnuA).

It localises to the cell inner membrane. The enzyme catalyses Zn(2+)(out) + ATP(in) + H2O(in) = Zn(2+)(in) + ADP(in) + phosphate(in) + H(+)(in). Functionally, part of the ABC transporter complex ZnuABC involved in zinc import. Responsible for energy coupling to the transport system. This is Zinc import ATP-binding protein ZnuC from Shigella flexneri serotype 5b (strain 8401).